Consider the following 208-residue polypeptide: Uracil phosphoribosyltransferase (208 aa).

5-phospho-alpha-D-ribose 1-diphosphate-binding positions include Arg-78, Arg-103, and 130-138 (DPMLATGGS). Uracil-binding positions include Ile-193 and 198 to 200 (GDA). A 5-phospho-alpha-D-ribose 1-diphosphate-binding site is contributed by Asp-199.

This sequence belongs to the UPRTase family. Requires Mg(2+) as cofactor.

It carries out the reaction UMP + diphosphate = 5-phospho-alpha-D-ribose 1-diphosphate + uracil. It participates in pyrimidine metabolism; UMP biosynthesis via salvage pathway; UMP from uracil: step 1/1. Its activity is regulated as follows. Allosterically activated by GTP. Functionally, catalyzes the conversion of uracil and 5-phospho-alpha-D-ribose 1-diphosphate (PRPP) to UMP and diphosphate. The sequence is that of Uracil phosphoribosyltransferase from Histophilus somni (strain 129Pt) (Haemophilus somnus).